Reading from the N-terminus, the 1892-residue chain is Alpha-2-macroglobulin (1892 aa).

The first 23 residues, 1–23 (MKNIFRKFVFTIFVCLINLQLIA), serve as a signal peptide directing secretion. A cross-link (isoglutamyl cysteine thioester (Cys-Gln)) is located at residues 1441-1444 (CTEQ).

It belongs to the protease inhibitor I39 (alpha-2-macroglobulin) family. Bacterial alpha-2-macroglobulin subfamily.

Functionally, protects the bacterial cell from host peptidases. The sequence is that of Alpha-2-macroglobulin from Rickettsia conorii (strain ATCC VR-613 / Malish 7).